The sequence spans 520 residues: Cyclin-L2 (520 aa).

Cyclin-like stretches follow at residues 81–183 (ELIQ…RVLK) and 196–280 (KIIV…KILQ). The interval 309–520 (RAKGLLPPGS…DHPGHSRHRR (212 aa)) is disordered. A phosphoserine mark is found at S330, S337, S347, and S350. Residues 356–366 (RKMEGPKKAKG) are compositionally biased toward basic and acidic residues. The residue at position 368 (S368) is a Phosphoserine. An RS region spans residues 384 to 422 (RSREQSYSRSPSRSASPKRRKSDSGSTSGGSKSQSRSRS). Residues 407–429 (SGSTSGGSKSQSRSRSRSDSPPR) show a composition bias toward low complexity. A compositionally biased stretch (basic and acidic residues) spans 440-453 (SEVRGSRKSKDCKH). Basic residues predominate over residues 454–471 (LTQKPHKSRSRSSSRSRS). 2 stretches are compositionally biased toward basic and acidic residues: residues 472 to 481 (RSRERTDSSG) and 489 to 514 (YYRD…DHPG).

The protein belongs to the cyclin family. Cyclin L subfamily. Interacts with CDK11A, CDK11B, CDK12, CDK13 and POLR2A, the hyperphosphorylated C-terminal domain (CTD) of RNA polymerase II. May form a ternary complex with CDK11B and casein kinase II (CKII). Interacts with pre-mRNA-splicing factors, including at least SRSF1, SRSF2 and SRSF7/SLU7.

Its subcellular location is the nucleus speckle. It is found in the nucleus. The protein resides in the nucleoplasm. Functionally, involved in pre-mRNA splicing. May induce cell death, possibly by acting on the transcription and RNA processing of apoptosis-related factors. This chain is Cyclin-L2 (Ccnl2), found in Rattus norvegicus (Rat).